We begin with the raw amino-acid sequence, 164 residues long: Protein HIT1 (164 aa).

4 residues coordinate Zn(2+): Cys8, Cys11, Cys28, and Cys32. Residues Cys8–Ala49 form an HIT-type; degenerate zinc finger.

In Saccharomyces cerevisiae (strain ATCC 204508 / S288c) (Baker's yeast), this protein is Protein HIT1 (HIT1).